Here is a 1289-residue protein sequence, read N- to C-terminus: SH3 domain and tetratricopeptide repeat-containing protein 2 (1289 aa).

2 SH3 domains span residues 176–239 (EGHF…PLPV) and 267–330 (IGRG…LDSC). Residues 393-442 (SQPEGFREARSGGTWMERQTIGSRRSSGSGDSSPEEDELISASSDSYHLP) are disordered. The segment covering 414–424 (GSRRSSGSGDS) has biased composition (low complexity). TPR repeat units follow at residues 529–562 (ARLCFLLGRLSIRKTKLSQARVYFEEAIRVLDGA), 758–791 (RTLCLILSKMYLQHQSPDGSVHYLSQAHVLGKLL), 837–870 (GVVHNLLGLAFEDEGRTSRAAKSYLRALIRAREM), 1002–1038 (GQLLESLGQLYRNLNTSRSLRRSLACIKESLRIFVDL), 1085–1119 (LKLYEEAGDVFFNGTRHRHRAVEYYRAGAVPLARR), 1120–1153 (MKALRTELRIFNKLTELQISLEGYEKALEFATLA), 1167–1200 (LVAFHRLATVYFSLNMYEMAEDCYLKTLSLCPPW), and 1211–1245 (AKVYCRLGRLTFYQLKDAHDATEYFLLALAAAVLM).

This is SH3 domain and tetratricopeptide repeat-containing protein 2 (Sh3tc2) from Mus musculus (Mouse).